We begin with the raw amino-acid sequence, 185 residues long: Large ribosomal subunit protein bL25 (185 aa).

Belongs to the bacterial ribosomal protein bL25 family. CTC subfamily. As to quaternary structure, part of the 50S ribosomal subunit; part of the 5S rRNA/L5/L18/L25 subcomplex. Contacts the 5S rRNA. Binds to the 5S rRNA independently of L5 and L18.

In terms of biological role, this is one of the proteins that binds to the 5S RNA in the ribosome where it forms part of the central protuberance. In Chlamydia muridarum (strain MoPn / Nigg), this protein is Large ribosomal subunit protein bL25.